Consider the following 111-residue polypeptide: Cell cycle protein GpsB (111 aa).

Residues 38–72 (IKDYEAFHKEFEQLKQQNARLKRELEEQKLAVTQV) are a coiled coil.

Belongs to the GpsB family. Forms polymers through the coiled coil domains. Interacts with PBP1, MreC and EzrA.

The protein resides in the cytoplasm. Divisome component that associates with the complex late in its assembly, after the Z-ring is formed, and is dependent on DivIC and PBP2B for its recruitment to the divisome. Together with EzrA, is a key component of the system that regulates PBP1 localization during cell cycle progression. Its main role could be the removal of PBP1 from the cell pole after pole maturation is completed. Also contributes to the recruitment of PBP1 to the division complex. Not essential for septum formation. The protein is Cell cycle protein GpsB of Bacillus cereus (strain G9842).